The primary structure comprises 104 residues: Large ribosomal subunit protein bL21 (104 aa).

It belongs to the bacterial ribosomal protein bL21 family. In terms of assembly, part of the 50S ribosomal subunit. Contacts protein L20.

This protein binds to 23S rRNA in the presence of protein L20. This chain is Large ribosomal subunit protein bL21, found in Clostridium tetani (strain Massachusetts / E88).